The primary structure comprises 207 residues: Chloramphenicol acetyltransferase (207 aa).

Histidine 186 (proton acceptor) is an active-site residue.

Belongs to the chloramphenicol acetyltransferase family. Homotrimer.

It catalyses the reaction chloramphenicol + acetyl-CoA = chloramphenicol 3-acetate + CoA. Functionally, this enzyme is an effector of chloramphenicol resistance in bacteria. This chain is Chloramphenicol acetyltransferase (catP), found in Clostridium perfringens.